The chain runs to 395 residues: Protein PELOTA 2 (395 aa).

Belongs to the eukaryotic release factor 1 family. Pelota subfamily. Requires a divalent metal cation as cofactor.

It is found in the cytoplasm. It localises to the nucleus. Functionally, component of the Pelota-HBS1L complex, a complex that recognizes stalled ribosomes and triggers the No-Go Decay (NGD) pathway. In the Pelota-HBS1L complex, pelo recognizes ribosomes stalled at the 3' end of an mRNA and engages stalled ribosomes by destabilizing mRNA in the mRNA channel. Following ribosome-binding, the Pelota-HBS1L complex promotes the disassembly of stalled ribosomes, followed by degradation of damaged mRNAs as part of the NGD pathway. The sequence is that of Protein PELOTA 2 (PEL2) from Arabidopsis thaliana (Mouse-ear cress).